The following is a 1454-amino-acid chain: Serine/threonine-protein kinase VPS15 (1454 aa).

A lipid anchor (N-myristoyl glycine) is attached at Gly-2. Positions 27-300 constitute a Protein kinase domain; it reads VHYVSQLNSS…LLNKYRGIFF (274 aa). ATP is bound by residues 33-41 and Lys-54; that span reads LNSSRFLKT. The Proton acceptor role is filled by Asp-147. 4 HEAT repeats span residues 460–497, 576–613, 615–652, and 654–691; these read NKID…SVRK, KLIQ…FFGR, RTND…LLGT, and TLEQ…TGLI. 6 WD repeats span residues 1078-1118, 1126-1165, 1229-1268, 1275-1315, 1344-1382, and 1422-1454; these read NEPN…VGEV, DCSS…QESE, PRHG…LIRS, APIT…CQYA, RSLN…SSKA, and YHHD…GIFQ.

It belongs to the protein kinase superfamily. Ser/Thr protein kinase family. Component of the autophagy-specific VPS34 PI3-kinase complex I composed of VPS15, VPS30, VPS34, ATG14 and ATG38; and of the VPS34 PI3-kinase complex II composed of VPS15, VPS30, VPS34 and VPS38. Interacts directly with ATG14 and GPA1. Interacts directly with VPS34. Autophosphorylated.

It localises to the golgi apparatus. The protein localises to the trans-Golgi network membrane. Its subcellular location is the endosome membrane. The catalysed reaction is L-seryl-[protein] + ATP = O-phospho-L-seryl-[protein] + ADP + H(+). The enzyme catalyses L-threonyl-[protein] + ATP = O-phospho-L-threonyl-[protein] + ADP + H(+). In terms of biological role, serine/threonine-protein kinase required for cytoplasm to vacuole transport (Cvt) and autophagy as a part of the autophagy-specific VPS34 PI3-kinase complex I. This complex is essential to recruit the ATG8-phosphatidylinositol conjugate and the ATG12-ATG5 conjugate to the pre-autophagosomal structure. Is also involved in endosome-to-Golgi retrograde transport as part of the VPS34 PI3-kinase complex II. This second complex is required for the endosome-to-Golgi retrieval of PEP1 and KEX2, and the recruitment of VPS5 and VPS7, two components of the retromer complex, to endosomal membranes (probably through the synthesis of a specific pool of phosphatidylinositol 3-phosphate recruiting the retromer to the endosomes). By regulating VPS34 kinase activity, VPS15 appears to be essential for the efficient delivery of soluble hydrolases to the yeast vacuole. May function as a G protein beta subunit to propagate the pheromone response at the endosome with GPA1. This Saccharomyces cerevisiae (strain ATCC 204508 / S288c) (Baker's yeast) protein is Serine/threonine-protein kinase VPS15.